The chain runs to 789 residues: Potassium transporter 4 (789 aa).

The Cytoplasmic portion of the chain corresponds to 1-32; that stretch reads MAPAESGVSPRRNPSQLSWMNLSSNLILAYQS. The residue at position 9 (serine 9) is a Phosphoserine. Residues 33–53 form a helical membrane-spanning segment; the sequence is FGVVYGDLSTSPLYVFPSTFI. Residues 54 to 68 are Extracellular-facing; the sequence is GKLHKHHNEDAVFGA. Residues 69-89 traverse the membrane as a helical segment; sequence FSLIFWTLTLIPLLKYLLVLL. Over 90 to 154 the chain is Cytoplasmic; that stretch reads SADDNGEGGT…FLEKHKRLRT (65 aa). A helical transmembrane segment spans residues 155–175; sequence ALLLVVLFGAAMVIGDGVLTP. Topologically, residues 176–195 are extracellular; that stretch reads ALSVLSSLSGLQATEKNVTD. The chain crosses the membrane as a helical span at residues 196 to 216; sequence GELLVLACVILVGLFALQHCG. At 217–219 the chain is on the cytoplasmic side; it reads THR. A helical membrane pass occupies residues 220 to 240; that stretch reads VAFMFAPIVIIWLISIFFIGL. At 241-270 the chain is on the extracellular side; that stretch reads YNIIRWNPKIIHAVSPLYIIKFFRVTGQDG. Residues 271 to 291 traverse the membrane as a helical segment; sequence WISLGGVLLSVTGTEAMFANL. Topologically, residues 292 to 300 are cytoplasmic; that stretch reads GHFTSVSIR. Residues 301 to 321 form a helical membrane-spanning segment; the sequence is VAFAVVVYPCLVVQYMGQAAF. Topologically, residues 322–340 are extracellular; the sequence is LSKNLGSIPNSFYDSVPDP. A helical membrane pass occupies residues 341–361; the sequence is VFWPVFVIATLAAIVGSQAVI. Residues 362-392 lie on the Cytoplasmic side of the membrane; sequence TTTFSIIKQCHALGCFPRIKVVHTSKHIYGQ. Residues 393 to 413 form a helical membrane-spanning segment; the sequence is IYIPEINWILMILTLAMAIGF. Over 414-424 the chain is Extracellular; sequence RDTTLIGNAYG. The helical transmembrane segment at 425–445 threads the bilayer; it reads IACMVVMFITTFFMALVIVVV. Topologically, residues 446 to 450 are cytoplasmic; sequence WQKSC. A helical transmembrane segment spans residues 451-471; it reads FLAALFLGTLWIIEGVYLSAA. The Extracellular segment spans residues 472–478; the sequence is LMKVTEG. The chain crosses the membrane as a helical span at residues 479 to 499; sequence GWVPFVLTFIFMIAMYVWHYG. Residues 500–789 are Cytoplasmic-facing; it reads TRRKYSFDLH…LIEVGMIYYV (290 aa).

Belongs to the HAK/KUP transporter (TC 2.A.72.3) family. In terms of tissue distribution, detected at very low levels in roots, stems, leaves and flowers of mature plants and strongly expressed in the roots of potassium-starved plants.

The protein resides in the cell membrane. High-affinity potassium transporter. The protein is Potassium transporter 4 (POT4) of Arabidopsis thaliana (Mouse-ear cress).